A 466-amino-acid polypeptide reads, in one-letter code: Vacuolar protein sorting-associated protein 30 (466 aa).

The tract at residues 35-55 is disordered; that stretch reads SETNTDNSDNNKHNGENDRNI. Positions 43-53 are enriched in basic and acidic residues; sequence DNNKHNGENDR. The stretch at 149 to 258 forms a coiled coil; sequence DTLLEKLKEE…QMEHLSFIKD (110 aa). Residues 279–463 are BARA; the sequence is LNIYNETFRI…LAFSTSRINK (185 aa). Residues 439-464 are required for membrane-association, autophagic function during starvation and normal autophagosome morphology; that stretch reads WTTACKFLLTNIKWLLAFSTSRINKA.

This sequence belongs to the beclin family. In terms of assembly, component of the autophagy-specific VPS34 PI3-kinase complex I; and of the VPS34 PI3-kinase complex II.

The protein resides in the endosome membrane. Its subcellular location is the vacuole membrane. The protein localises to the preautophagosomal structure membrane. In terms of biological role, required for cytoplasm to vacuole transport (Cvt), autophagy, nucleophagy, and mitophagy, as a part of the autophagy-specific VPS34 PI3-kinase complex I. This complex is essential to recruit the ATG8-phosphatidylinositol conjugate and the ATG12-ATG5 conjugate to the pre-autophagosomal structure. Also involved in endosome-to-Golgi retrograde transport as part of the VPS34 PI3-kinase complex II. This Kluyveromyces marxianus (strain DMKU3-1042 / BCC 29191 / NBRC 104275) (Yeast) protein is Vacuolar protein sorting-associated protein 30.